A 138-amino-acid polypeptide reads, in one-letter code: Small ribosomal subunit protein uS11c (138 aa).

The tract at residues Met-1 to Arg-23 is disordered.

Belongs to the universal ribosomal protein uS11 family. As to quaternary structure, part of the 30S ribosomal subunit.

The protein resides in the plastid. It is found in the chloroplast. The protein is Small ribosomal subunit protein uS11c of Ipomoea purpurea (Common morning glory).